The following is a 145-amino-acid chain: Protein MMF1, mitochondrial (145 aa).

Residues 1–17 constitute a mitochondrion transit peptide; the sequence is MFLRNSVLRTAPVLRRG.

This sequence belongs to the RutC family.

Its subcellular location is the mitochondrion matrix. Functionally, plays a role in the maintenance of mitochondrial DNA. This is Protein MMF1, mitochondrial (MMF1) from Saccharomyces cerevisiae (strain ATCC 204508 / S288c) (Baker's yeast).